A 320-amino-acid chain; its full sequence is MKTNNPVVQLITISADEAGQRIDNFLLAKLKGVPKSMIYRIVRKGEVRVNKGRIKPEYKLADGDVVRVPPVRVAEREEVQVSAKLDKVAALADCILFEDDYLLVLNKPSGTAVHGGSGLSFGVIEGLRALRPEARFLELVHRLDRDTSGVLLVAKKRSALRSLHEQLRLKSMQKDYLALVRGQWQSHCKAIQAPLLKNIMQSGERVVKVSSEGKPSETRFKIEERFEHATLVKASPVTGRTHQIRVHALHAGHPIAFDDRYGYREFDQQLQGTGLHRLFLHAAALRFEHPNTGETMRIEAPLDNQLRHCLLALRKNATVK.

In terms of domain architecture, S4 RNA-binding spans 20 to 83 (QRIDNFLLAK…AEREEVQVSA (64 aa)). Asp144 is a catalytic residue.

It belongs to the pseudouridine synthase RluA family.

The enzyme catalyses uridine(955/2504/2580) in 23S rRNA = pseudouridine(955/2504/2580) in 23S rRNA. In terms of biological role, responsible for synthesis of pseudouridine from uracil at positions 955, 2504 and 2580 in 23S ribosomal RNA. This is Ribosomal large subunit pseudouridine synthase C (rluC) from Yersinia pestis.